Here is a 257-residue protein sequence, read N- to C-terminus: Imidazole glycerol phosphate synthase subunit HisF (257 aa).

Active-site residues include Asp11 and Asp130.

Belongs to the HisA/HisF family. In terms of assembly, heterodimer of HisH and HisF.

The protein localises to the cytoplasm. The enzyme catalyses 5-[(5-phospho-1-deoxy-D-ribulos-1-ylimino)methylamino]-1-(5-phospho-beta-D-ribosyl)imidazole-4-carboxamide + L-glutamine = D-erythro-1-(imidazol-4-yl)glycerol 3-phosphate + 5-amino-1-(5-phospho-beta-D-ribosyl)imidazole-4-carboxamide + L-glutamate + H(+). Its pathway is amino-acid biosynthesis; L-histidine biosynthesis; L-histidine from 5-phospho-alpha-D-ribose 1-diphosphate: step 5/9. Its function is as follows. IGPS catalyzes the conversion of PRFAR and glutamine to IGP, AICAR and glutamate. The HisF subunit catalyzes the cyclization activity that produces IGP and AICAR from PRFAR using the ammonia provided by the HisH subunit. The polypeptide is Imidazole glycerol phosphate synthase subunit HisF (Francisella philomiragia subsp. philomiragia (strain ATCC 25017 / CCUG 19701 / FSC 153 / O#319-036)).